A 253-amino-acid chain; its full sequence is Blue-light photoreceptor (253 aa).

The PAS domain maps to 6 to 79 (KFDVILKALN…AKIRHAINEK (74 aa)). C56 is modified (S-4a-FMN cysteine). One can recognise a PAC domain in the interval 80 to 133 (STANVLLKNYRKNGTSFMNELTIEPIYDDNDHLYFVGIQKDVTTEHNYQLELEK). The 112-residue stretch at 142–253 (STPIVPIKEN…STIKEALQFY (112 aa)) folds into the STAS domain.

Post-translationally, FMN binds covalently to cysteine after exposure to blue light and this bond is spontaneously broken in the dark.

In terms of biological role, exhibits the same spectroscopical features and blue-light induced photochemistry as plants phototropins, with the reversible formation of a blue-shifted photoproduct, assigned to an FMN-cysteine thiol adduct. Positive regulator in the activation of the general stress transcription factor sigma-B. This chain is Blue-light photoreceptor, found in Listeria innocua serovar 6a (strain ATCC BAA-680 / CLIP 11262).